The sequence spans 372 residues: Peroxisomal biogenesis factor 3 (372 aa).

Over 1–15 the chain is Cytoplasmic; sequence MLRSMWNFLKRHKKK. The targeting to peroxisomes stretch occupies residues 1–45; the sequence is MLRSMWNFLKRHKKKCIFLGTVLGGVYILGKYGQKKLREIQEREA. Residues 16-36 traverse the membrane as a helical segment; it reads CIFLGTVLGGVYILGKYGQKK. The Peroxisomal portion of the chain corresponds to 37-116; sequence LREIQEREAA…LKIISFTRSI (80 aa). The chain crosses the membrane as a helical span at residues 117–140; that stretch reads VAVYSTCMLVVLLRVQLNIIGGYI. The interaction with PEX19 stretch occupies residues 120–136; sequence YSTCMLVVLLRVQLNII. Residues 141-372 lie on the Cytoplasmic side of the membrane; that stretch reads YLDNATVGKN…AFSTPQQLEK (232 aa).

This sequence belongs to the peroxin-3 family. Interacts with PEX19.

It is found in the peroxisome membrane. Involved in peroxisome biosynthesis and integrity. Assembles membrane vesicles before the matrix proteins are translocated. As a docking factor for PEX19, is necessary for the import of peroxisomal membrane proteins in the peroxisomes. This Rattus norvegicus (Rat) protein is Peroxisomal biogenesis factor 3 (Pex3).